A 260-amino-acid chain; its full sequence is F-actin-capping protein subunit beta (260 aa).

The protein belongs to the F-actin-capping protein beta subunit family. As to quaternary structure, component of the F-actin capping complex, composed of a heterodimer of an alpha and a beta subunit.

It is found in the cytoplasm. The protein resides in the cytoskeleton. The protein localises to the actin patch. Functionally, F-actin-capping proteins bind in a Ca(2+)-independent manner to the fast growing ends of actin filaments (barbed end) thereby blocking the exchange of subunits at these ends. Unlike other capping proteins (such as gelsolin and severin), these proteins do not sever actin filaments. The sequence is that of F-actin-capping protein subunit beta (CAP2) from Yarrowia lipolytica (strain CLIB 122 / E 150) (Yeast).